The chain runs to 668 residues: Threonine--tRNA ligase (668 aa).

A TGS domain is found at 1 to 64 (MSEAIFLTFP…ADGKIEIITR (64 aa)). Residues 245–553 (DHRKLGREMD…LIENFAGHLP (309 aa)) form a catalytic region. The Zn(2+) site is built by Cys-347, His-398, and His-530.

Belongs to the class-II aminoacyl-tRNA synthetase family. In terms of assembly, homodimer. It depends on Zn(2+) as a cofactor.

The protein localises to the cytoplasm. The enzyme catalyses tRNA(Thr) + L-threonine + ATP = L-threonyl-tRNA(Thr) + AMP + diphosphate + H(+). Catalyzes the attachment of threonine to tRNA(Thr) in a two-step reaction: L-threonine is first activated by ATP to form Thr-AMP and then transferred to the acceptor end of tRNA(Thr). Also edits incorrectly charged L-seryl-tRNA(Thr). In Rhizobium leguminosarum bv. trifolii (strain WSM2304), this protein is Threonine--tRNA ligase.